The primary structure comprises 348 residues: Holliday junction branch migration complex subunit RuvB (348 aa).

Residues 1–10 are compositionally biased toward polar residues; the sequence is MAIVSSNAGS. The disordered stretch occupies residues 1 to 41; it reads MAIVSSNAGSSAPRREPVLDAQPLPEESSGRPDDGLRPKRL. The tract at residues 13 to 197 is large ATPase domain (RuvB-L); that stretch reads PRREPVLDAQ…FGLIQRLEFY (185 aa). A compositionally biased stretch (basic and acidic residues) spans 28 to 41; sequence SSGRPDDGLRPKRL. 9 residues coordinate ATP: L36, R37, G78, K81, T82, T83, R187, Y197, and R234. Residue T82 coordinates Mg(2+). The tract at residues 198 to 269 is small ATPAse domain (RuvB-S); sequence GQEDLEAIVS…LVSQALSLHR (72 aa). Positions 272-348 are head domain (RuvB-H); sequence HRGLDAGDRR…RAHLREQEVA (77 aa). Residues R327 and R332 each contribute to the DNA site.

The protein belongs to the RuvB family. As to quaternary structure, homohexamer. Forms an RuvA(8)-RuvB(12)-Holliday junction (HJ) complex. HJ DNA is sandwiched between 2 RuvA tetramers; dsDNA enters through RuvA and exits via RuvB. An RuvB hexamer assembles on each DNA strand where it exits the tetramer. Each RuvB hexamer is contacted by two RuvA subunits (via domain III) on 2 adjacent RuvB subunits; this complex drives branch migration. In the full resolvosome a probable DNA-RuvA(4)-RuvB(12)-RuvC(2) complex forms which resolves the HJ.

The protein resides in the cytoplasm. It catalyses the reaction ATP + H2O = ADP + phosphate + H(+). Functionally, the RuvA-RuvB-RuvC complex processes Holliday junction (HJ) DNA during genetic recombination and DNA repair, while the RuvA-RuvB complex plays an important role in the rescue of blocked DNA replication forks via replication fork reversal (RFR). RuvA specifically binds to HJ cruciform DNA, conferring on it an open structure. The RuvB hexamer acts as an ATP-dependent pump, pulling dsDNA into and through the RuvAB complex. RuvB forms 2 homohexamers on either side of HJ DNA bound by 1 or 2 RuvA tetramers; 4 subunits per hexamer contact DNA at a time. Coordinated motions by a converter formed by DNA-disengaged RuvB subunits stimulates ATP hydrolysis and nucleotide exchange. Immobilization of the converter enables RuvB to convert the ATP-contained energy into a lever motion, pulling 2 nucleotides of DNA out of the RuvA tetramer per ATP hydrolyzed, thus driving DNA branch migration. The RuvB motors rotate together with the DNA substrate, which together with the progressing nucleotide cycle form the mechanistic basis for DNA recombination by continuous HJ branch migration. Branch migration allows RuvC to scan DNA until it finds its consensus sequence, where it cleaves and resolves cruciform DNA. This Parasynechococcus marenigrum (strain WH8102) protein is Holliday junction branch migration complex subunit RuvB.